A 350-amino-acid chain; its full sequence is 4-hydroxy-3-methylbut-2-enyl diphosphate reductase (350 aa).

C19 is a binding site for [4Fe-4S] cluster. (2E)-4-hydroxy-3-methylbut-2-enyl diphosphate contacts are provided by H48 and H84. The dimethylallyl diphosphate site is built by H48 and H84. Residues H48 and H84 each coordinate isopentenyl diphosphate. C106 provides a ligand contact to [4Fe-4S] cluster. (2E)-4-hydroxy-3-methylbut-2-enyl diphosphate is bound at residue H134. H134 contributes to the dimethylallyl diphosphate binding site. Residue H134 coordinates isopentenyl diphosphate. E136 (proton donor) is an active-site residue. Residue T175 coordinates (2E)-4-hydroxy-3-methylbut-2-enyl diphosphate. C205 is a binding site for [4Fe-4S] cluster. Positions 233, 234, 235, and 278 each coordinate (2E)-4-hydroxy-3-methylbut-2-enyl diphosphate. The dimethylallyl diphosphate site is built by S233, S234, N235, and S278. Residues S233, S234, N235, and S278 each contribute to the isopentenyl diphosphate site.

It belongs to the IspH family. [4Fe-4S] cluster is required as a cofactor.

The catalysed reaction is isopentenyl diphosphate + 2 oxidized [2Fe-2S]-[ferredoxin] + H2O = (2E)-4-hydroxy-3-methylbut-2-enyl diphosphate + 2 reduced [2Fe-2S]-[ferredoxin] + 2 H(+). The enzyme catalyses dimethylallyl diphosphate + 2 oxidized [2Fe-2S]-[ferredoxin] + H2O = (2E)-4-hydroxy-3-methylbut-2-enyl diphosphate + 2 reduced [2Fe-2S]-[ferredoxin] + 2 H(+). The protein operates within isoprenoid biosynthesis; dimethylallyl diphosphate biosynthesis; dimethylallyl diphosphate from (2E)-4-hydroxy-3-methylbutenyl diphosphate: step 1/1. Its pathway is isoprenoid biosynthesis; isopentenyl diphosphate biosynthesis via DXP pathway; isopentenyl diphosphate from 1-deoxy-D-xylulose 5-phosphate: step 6/6. In terms of biological role, catalyzes the conversion of 1-hydroxy-2-methyl-2-(E)-butenyl 4-diphosphate (HMBPP) into a mixture of isopentenyl diphosphate (IPP) and dimethylallyl diphosphate (DMAPP). Acts in the terminal step of the DOXP/MEP pathway for isoprenoid precursor biosynthesis. The chain is 4-hydroxy-3-methylbut-2-enyl diphosphate reductase from Brucella anthropi (strain ATCC 49188 / DSM 6882 / CCUG 24695 / JCM 21032 / LMG 3331 / NBRC 15819 / NCTC 12168 / Alc 37) (Ochrobactrum anthropi).